We begin with the raw amino-acid sequence, 245 residues long: Probable phosphatase NT01EI_1577 (245 aa).

Zn(2+) contacts are provided by His7, His9, His15, His40, Glu73, His101, His131, Asp192, and His194.

This sequence belongs to the PHP family. Homotrimer. The cofactor is Zn(2+).

In Edwardsiella ictaluri (strain 93-146), this protein is Probable phosphatase NT01EI_1577.